A 320-amino-acid polypeptide reads, in one-letter code: Tyrosine recombinase XerC (320 aa).

The 91-residue stretch at 14–104 (ADVREAVASW…SLRSFARHLE (91 aa)) folds into the Core-binding (CB) domain. The Tyr recombinase domain maps to 125 to 311 (RLPRPLPVAA…DSARLMSAFE (187 aa)). Catalysis depends on residues R170, K195, H263, R266, and H289. The active-site O-(3'-phospho-DNA)-tyrosine intermediate is Y298.

Belongs to the 'phage' integrase family. XerC subfamily. Forms a cyclic heterotetrameric complex composed of two molecules of XerC and two molecules of XerD.

It localises to the cytoplasm. Its function is as follows. Site-specific tyrosine recombinase, which acts by catalyzing the cutting and rejoining of the recombining DNA molecules. The XerC-XerD complex is essential to convert dimers of the bacterial chromosome into monomers to permit their segregation at cell division. It also contributes to the segregational stability of plasmids. This chain is Tyrosine recombinase XerC, found in Methylobacterium sp. (strain 4-46).